Consider the following 224-residue polypeptide: Propanediol dehydratase medium subunit (224 aa).

The targets protein to the BMC stretch occupies residues 1–18 (MEINEKLLRQIIEDVLRD).

Belongs to the diol/glycerol dehydratase medium subunit family. In terms of assembly, the propanediol dehydratase enzyme is a heterotrimeric complex composed of a large (PduC), a medium (PduD) and a small (PduE) subunit. Requires adenosylcob(III)alamin as cofactor.

It is found in the bacterial microcompartment. It carries out the reaction propane-1,2-diol = propanal + H2O. The protein operates within polyol metabolism; 1,2-propanediol degradation. Its activity is regulated as follows. Inhibited by glycerol. Functionally, part of the PduCDE complex that catalyzes the dehydration of 1,2-propanediol (1,2-PD) to propionaldehyde. Required for S.typhimurium growth on 1,2-PD as the sole carbon and energy source. This subunit is directly targeted to the bacterial microcompartment (BMC) dedicated to 1,2-PD degradation, and is also responsible for targeting the other 2 subunits (pduC and pduE). The 1,2-PD-specific bacterial microcompartment (BMC) concentrates low levels of 1,2-PD catabolic enzymes, concentrates volatile reaction intermediates thus enhancing pathway flux and keeps the level of toxic, mutagenic propionaldehyde low. The protein is Propanediol dehydratase medium subunit of Salmonella typhimurium (strain LT2 / SGSC1412 / ATCC 700720).